The sequence spans 309 residues: Transcription elongation factor S-II (309 aa).

The region spanning 5 to 79 (EVLVHVKNLE…SSWKDAINKN (75 aa)) is the TFIIS N-terminal domain. Positions 78–142 (KNKRSRQAQQ…NSKNDGVDTA (65 aa)) are disordered. A compositionally biased stretch (basic and acidic residues) spans 88–102 (HHQDHAPGNAEDKTT). Positions 103-120 (VGESVNGVQQPASSQSDA) are enriched in polar residues. Serine 116 is modified (phosphoserine). Residues 148-264 (LRDQVLKALY…NAQGATIERS (117 aa)) form the TFIIS central domain. The segment at 267–307 (DRFTCGKCKEKKVSYYQLQTRSADEPLTTFCTCEACGNRWK) adopts a TFIIS-type zinc-finger fold. The Zn(2+) site is built by cysteine 271, cysteine 274, cysteine 299, and cysteine 302.

The protein belongs to the TFS-II family.

It localises to the nucleus. In terms of biological role, necessary for efficient RNA polymerase II transcription elongation past template-encoded arresting sites. The arresting sites in DNA have the property of trapping a certain fraction of elongating RNA polymerases that pass through, resulting in locked ternary complexes. Cleavage of the nascent transcript by S-II allows the resumption of elongation from the new 3'-terminus. Can promote the transfer of one strand of a double-stranded DNA molecule to a homologous single strand and thus may be involved in recombination. The chain is Transcription elongation factor S-II (DST1) from Saccharomyces cerevisiae (strain ATCC 204508 / S288c) (Baker's yeast).